Here is a 98-residue protein sequence, read N- to C-terminus: NADH-ubiquinone oxidoreductase chain 4L (98 aa).

3 consecutive transmembrane segments (helical) span residues Met1–Ile21, Ser28–Ile48, and Ala59–Val79.

The protein belongs to the complex I subunit 4L family. As to quaternary structure, core subunit of respiratory chain NADH dehydrogenase (Complex I) which is composed of 45 different subunits.

It is found in the mitochondrion inner membrane. The catalysed reaction is a ubiquinone + NADH + 5 H(+)(in) = a ubiquinol + NAD(+) + 4 H(+)(out). In terms of biological role, core subunit of the mitochondrial membrane respiratory chain NADH dehydrogenase (Complex I) which catalyzes electron transfer from NADH through the respiratory chain, using ubiquinone as an electron acceptor. Part of the enzyme membrane arm which is embedded in the lipid bilayer and involved in proton translocation. The protein is NADH-ubiquinone oxidoreductase chain 4L (MT-ND4L) of Osphranter robustus (Wallaroo).